A 115-amino-acid chain; its full sequence is MYRKIFDMVNGSEEQSKITDWLYKLMIEDENSLYKIDIKVSKRRISEQGDIYREEGEYIENADLQTLPIGTKSFVQNGCWKGEIVSNEKKHLYMPQIGEMREIKVGSTGLNIEIE.

This is SPbeta prophage-derived uncharacterized protein YoqS (yoqS) from Bacillus subtilis (strain 168).